The chain runs to 359 residues: Alanine racemase (359 aa).

K34 serves as the catalytic Proton acceptor; specific for D-alanine. At K34 the chain carries N6-(pyridoxal phosphate)lysine. R129 provides a ligand contact to substrate. The Proton acceptor; specific for L-alanine role is filled by Y256. M304 provides a ligand contact to substrate.

The protein belongs to the alanine racemase family. Pyridoxal 5'-phosphate serves as cofactor.

It catalyses the reaction L-alanine = D-alanine. It participates in amino-acid biosynthesis; D-alanine biosynthesis; D-alanine from L-alanine: step 1/1. Catalyzes the interconversion of L-alanine and D-alanine. May also act on other amino acids. The polypeptide is Alanine racemase (alr) (Photobacterium profundum (strain SS9)).